The sequence spans 1007 residues: Retinoblastoma-related protein (1007 aa).

The segment at T406 to L604 is domain A. The tract at residues T406 to P856 is pocket. The interval I605–E725 is spacer. Positions P644–K665 are disordered. The segment at T726 to P856 is domain B.

The protein belongs to the retinoblastoma protein (RB) family.

The protein resides in the nucleus. Its function is as follows. Regulator of biological processes that recruits a histone deacetylase to control gene transcription. May play a role in the entry into mitosis, negatively regulating the cell proliferation. Formation of stable complexes with geminiviridae replication-associated proteins may create a cellular environment which favors viral DNA replication. This Vitis vinifera (Grape) protein is Retinoblastoma-related protein (RBR).